Consider the following 259-residue polypeptide: Protein-L-isoaspartate O-methyltransferase (259 aa).

Residues 1-25 (MRKRVDPPAGGRLAPGITPANSNTR) form a disordered region. S107 is an active-site residue.

This sequence belongs to the methyltransferase superfamily. L-isoaspartyl/D-aspartyl protein methyltransferase family.

Its subcellular location is the cytoplasm. It carries out the reaction [protein]-L-isoaspartate + S-adenosyl-L-methionine = [protein]-L-isoaspartate alpha-methyl ester + S-adenosyl-L-homocysteine. In terms of biological role, catalyzes the methyl esterification of L-isoaspartyl residues in peptides and proteins that result from spontaneous decomposition of normal L-aspartyl and L-asparaginyl residues. It plays a role in the repair and/or degradation of damaged proteins. The polypeptide is Protein-L-isoaspartate O-methyltransferase (Bordetella bronchiseptica (strain ATCC BAA-588 / NCTC 13252 / RB50) (Alcaligenes bronchisepticus)).